Reading from the N-terminus, the 478-residue chain is Islet cell autoantigen 1 (478 aa).

The AH domain maps to 50–253; that stretch reads ASDADLDAKL…TSHTMAAIHE (204 aa). The segment covering 306-317 has biased composition (basic and acidic residues); sequence EHKDSSAYKTEE. Disordered stretches follow at residues 306-365 and 398-422; these read EHKD…SGDK and LKEP…GFLP.

Predominantly expressed in brain, pancreas and stomach mucosa. High expression also found in stomach muscle and testis.

Its subcellular location is the cytoplasm. It is found in the cytosol. The protein localises to the golgi apparatus membrane. It localises to the cytoplasmic vesicle. The protein resides in the secretory vesicle membrane. Its subcellular location is the secretory vesicle. It is found in the synaptic vesicle membrane. In terms of biological role, may play a role in neurotransmitter secretion. This chain is Islet cell autoantigen 1, found in Mus musculus (Mouse).